The chain runs to 366 residues: 4-hydroxy-3-methylbut-2-en-1-yl diphosphate synthase (flavodoxin) (366 aa).

Cysteine 270, cysteine 273, cysteine 305, and glutamate 312 together coordinate [4Fe-4S] cluster.

This sequence belongs to the IspG family. The cofactor is [4Fe-4S] cluster.

It carries out the reaction (2E)-4-hydroxy-3-methylbut-2-enyl diphosphate + oxidized [flavodoxin] + H2O + 2 H(+) = 2-C-methyl-D-erythritol 2,4-cyclic diphosphate + reduced [flavodoxin]. It functions in the pathway isoprenoid biosynthesis; isopentenyl diphosphate biosynthesis via DXP pathway; isopentenyl diphosphate from 1-deoxy-D-xylulose 5-phosphate: step 5/6. In terms of biological role, converts 2C-methyl-D-erythritol 2,4-cyclodiphosphate (ME-2,4cPP) into 1-hydroxy-2-methyl-2-(E)-butenyl 4-diphosphate. In Wigglesworthia glossinidia brevipalpis, this protein is 4-hydroxy-3-methylbut-2-en-1-yl diphosphate synthase (flavodoxin).